Consider the following 1450-residue polypeptide: Inactive serine/threonine-protein kinase TEX14 (1450 aa).

ANK repeat units lie at residues 27 to 54 (LHEY…AVNT), 55 to 84 (QGQS…DPNH), and 88 to 117 (DGST…DLRL). 2 positions are modified to phosphoserine: Ser-175 and Ser-186. The Protein kinase domain maps to 199-512 (IISAQNIYSF…ILKNDLKEFI (314 aa)). ATP-binding positions include 205-213 (IYSFGFGKF) and Lys-267. Residue Ser-431 is modified to Phosphoserine; by PLK1. Residues Ser-561 and Ser-662 each carry the phosphoserine modification. Residues 700 to 720 (SDSLGSLNLPEPTREAKGKTS) form a disordered region. The short motif at 791-797 (GPPSLAY) is the GPPX3Y element. 4 disordered regions span residues 852–906 (VSEE…MASV), 947–977 (PPWN…RGPE), 992–1012 (DEPK…DKNK), and 1035–1062 (QPEQ…SSPI). 2 stretches are compositionally biased toward polar residues: residues 875–886 (KQSTGEQLPSTQ) and 894–906 (KNTN…MASV). Positions 889-897 (RESLEKNTN) match the D-box motif. Over residues 992-1011 (DEPKGNTKFGKMDNSDCDKN) the composition is skewed to basic and acidic residues. The span at 1038 to 1061 (QNEASQASCDTSVGTEKFYSTSSP) shows a compositional bias: polar residues. Residues Ser-1060 and Ser-1221 each carry the phosphoserine modification. Disordered stretches follow at residues 1261-1282 (THAT…QQHL) and 1300-1418 (KQQQ…SLGT). Composition is skewed to polar residues over residues 1300-1311 (KQQQVSSLASHE) and 1332-1344 (TNSS…LSSR). Residues Ser-1357 and Ser-1358 each carry the phosphoserine modification. Basic and acidic residues-rich tracts occupy residues 1383–1397 (STRE…VVEQ) and 1404–1413 (SIKPERRESD). Residues Ser-1412 and Ser-1449 each carry the phosphoserine modification.

Belongs to the protein kinase superfamily. Interacts with KIF23 and RBM44. Interacts with CEP55; inhibiting interaction between CEP55 and PDCD6IP/ALIX and TSG101. Post-translationally, phosphorylated on Thr residues by CDK1 during early phases of mitosis, promoting the interaction with PLK1 and recruitment to kinetochores. Phosphorylated on Ser-431 by PLK1 during late prometaphase promotes the rapid depletion from kinetochores and its subsequent degradation by the APC/C complex. Detected in testis and spermatogonia. Not detectable in the other tissues tested.

The protein localises to the cytoplasm. It is found in the midbody. Its subcellular location is the chromosome. It localises to the centromere. The protein resides in the kinetochore. Functionally, required both for the formation of intercellular bridges during meiosis and for kinetochore-microtubule attachment during mitosis. Intercellular bridges are evolutionarily conserved structures that connect differentiating germ cells and are required for spermatogenesis and male fertility. Acts by promoting the conversion of midbodies into intercellular bridges via its interaction with CEP55: interaction with CEP55 inhibits the interaction between CEP55 and PDCD6IP/ALIX and TSG101, blocking cell abscission and leading to transform midbodies into intercellular bridges. Also plays a role during mitosis: recruited to kinetochores by PLK1 during early mitosis and regulates the maturation of the outer kinetochores and microtubule attachment. Has no protein kinase activity in vitro. In Mus musculus (Mouse), this protein is Inactive serine/threonine-protein kinase TEX14 (Tex14).